Reading from the N-terminus, the 224-residue chain is Charged multivesicular body protein 4b (224 aa).

Residues 1–23 form a disordered region; that stretch reads MSVFGKLFGAGGGKAGKGGPTPQ. Serine 2 is modified (N-acetylserine). At lysine 6 the chain carries N6-acetyllysine. The span at 8-19 shows a compositional bias: gly residues; that stretch reads FGAGGGKAGKGG. The stretch at 23–183 forms a coiled coil; the sequence is QEAIQRLRDT…EELDKNLLEI (161 aa). Lysine 114 carries the post-translational modification N6-acetyllysine. A phosphoserine mark is found at serine 184 and serine 223. Residues 185-224 are disordered; the sequence is GPETVPLPNVPSIALPSKPAKKKEEEDDDMKELENWAGSM.

It belongs to the SNF7 family. In terms of assembly, probable core component of the endosomal sorting required for transport complex III (ESCRT-III). ESCRT-III components are thought to multimerize to form a flat lattice on the perimeter membrane of the endosome. Several assembly forms of ESCRT-III may exist that interact and act sequentially. Interacts with CHMP6 and CHMP4C. Interacts with PDCD6IP; the interaction is direct. Interacts with VPS4A; the interaction is direct. Interacts with VPS4B; the interaction is direct. Interacts with CHMP7. Interacts with CFTR; the interaction requires misfolded CFTR. Interacts with PTPN23. Interacts with CC2D1B. Post-translationally, ISGylated. Isgylation weakens its interaction with VPS4A. In terms of tissue distribution, widely expressed. Expressed at higher level in heart and skeletal muscle. Also expressed in brain, colon, thymus, spleen, kidney, liver, small intestine, placenta, lung and peripheral blood lymphocytes.

It is found in the cytoplasm. The protein resides in the cytosol. Its subcellular location is the late endosome membrane. It localises to the midbody. The protein localises to the nucleus envelope. Its function is as follows. Probable core component of the endosomal sorting required for transport complex III (ESCRT-III) which is involved in multivesicular bodies (MVBs) formation and sorting of endosomal cargo proteins into MVBs. MVBs contain intraluminal vesicles (ILVs) that are generated by invagination and scission from the limiting membrane of the endosome and mostly are delivered to lysosomes enabling degradation of membrane proteins, such as stimulated growth factor receptors, lysosomal enzymes and lipids. The MVB pathway appears to require the sequential function of ESCRT-O, -I,-II and -III complexes. ESCRT-III proteins mostly dissociate from the invaginating membrane before the ILV is released. The ESCRT machinery also functions in topologically equivalent membrane fission events, such as the terminal stages of cytokinesis. Together with SPAST, the ESCRT-III complex promotes nuclear envelope sealing and mitotic spindle disassembly during late anaphase. Plays a role in the endosomal sorting pathway. ESCRT-III proteins are believed to mediate the necessary vesicle extrusion and/or membrane fission activities, possibly in conjunction with the AAA ATPase VPS4. When overexpressed, membrane-assembled circular arrays of CHMP4B filaments can promote or stabilize negative curvature and outward budding. CHMP4A/B/C are required for the exosomal release of SDCBP, CD63 and syndecan. Majority of the protein exists in a folded closed conformation. (Microbial infection) The ESCRT machinery also functions in topologically equivalent membrane fission events, such as the budding of enveloped viruses (HIV-1 and other lentiviruses). Via its interaction with PDCD6IP involved in HIV-1 p6- and p9-dependent virus release. This chain is Charged multivesicular body protein 4b (CHMP4B), found in Homo sapiens (Human).